The sequence spans 82 residues: RNA-binding protein Hfq (82 aa).

The 61-residue stretch at 11 to 71 (DTFLNHVRKT…ISTIMPGAPI (61 aa)) folds into the Sm domain.

It belongs to the Hfq family. As to quaternary structure, homohexamer.

In terms of biological role, RNA chaperone that binds small regulatory RNA (sRNAs) and mRNAs to facilitate mRNA translational regulation in response to envelope stress, environmental stress and changes in metabolite concentrations. Also binds with high specificity to tRNAs. This is RNA-binding protein Hfq from Bradyrhizobium diazoefficiens (strain JCM 10833 / BCRC 13528 / IAM 13628 / NBRC 14792 / USDA 110).